Reading from the N-terminus, the 365-residue chain is Coxsackievirus and adenovirus receptor (365 aa).

An N-terminal signal peptide occupies residues 1 to 19 (MALLLCFVLLCGVVDFARS). 2 Ig-like C2-type domains span residues 20–134 (LSIT…KKIH) and 141–228 (PSGA…LRLN). At 20 to 237 (LSITTPEEMI…NVVPPSNKAG (218 aa)) the chain is on the extracellular side. 2 disulfide bridges follow: cysteine 41/cysteine 120 and cysteine 162/cysteine 212. 2 N-linked (GlcNAc...) asparagine glycosylation sites follow: asparagine 106 and asparagine 201. A helical transmembrane segment spans residues 238-258 (LIAGAIIGTLLALALIGLIIF). Residues cysteine 259 and cysteine 260 are each lipidated (S-palmitoyl cysteine). The Cytoplasmic segment spans residues 259–365 (CCRKKRREEK…PAQSKDGSIV (107 aa)). The segment covering 269–282 (YEKEVHHDIREDVP) has biased composition (basic and acidic residues). A disordered region spans residues 269–343 (YEKEVHHDIR…TLPPAKVAAP (75 aa)). A compositionally biased stretch (polar residues) spans 286-322 (SRTSTARSYIGSNHSSLGSMSPSNMEGYSKTQYNQVP). Residues serine 297, serine 304, serine 306, serine 323, serine 332, and serine 363 each carry the phosphoserine modification. The PDZ-binding signature appears at 360–365 (KDGSIV).

As to quaternary structure, monomer. May form homodimer. Interacts with LNX, MAGI1, DLG4, PRKCABP, TJP1 and CTNNB1. Interacts with MPDZ; recruits MPDZ to intercellular contact sites. Interacts with JAML (homodimeric form). Secreted isoform 3, isoform 4 and isoform 5 can interact with the extracellular domain of the receptor. (Microbial infection) Interacts with adenovirus subgroups A, C, D, E and F fiber proteins as well as coxsackievirus B1, B2, B3, B4, B5 and B6 capsid proteins. N-glycosylated. Post-translationally, palmitoylated on Cys-259 and/or Cys-260; required for proper localization to the plasma membrane. Expressed in pancreas, brain, heart, small intestine, testis, prostate and at a lower level in liver and lung. Isoform 5 is ubiquitously expressed. Isoform 3 is expressed in heart, lung and pancreas. In skeletal muscle, isoform 1 is found at the neuromuscular junction and isoform 2 is found in blood vessels. In cardiac muscle, isoform 1 and isoform 2 are found at intercalated disks. In heart expressed in subendothelial layers of the vessel wall but not in the luminal endothelial surface. Expression is elevated in hearts with dilated cardiomyopathy.

It localises to the cell membrane. Its subcellular location is the basolateral cell membrane. The protein localises to the cell junction. The protein resides in the tight junction. It is found in the adherens junction. It localises to the secreted. In terms of biological role, component of the epithelial apical junction complex that may function as a homophilic cell adhesion molecule and is essential for tight junction integrity. Also involved in transepithelial migration of leukocytes through adhesive interactions with JAML a transmembrane protein of the plasma membrane of leukocytes. The interaction between both receptors also mediates the activation of gamma-delta T-cells, a subpopulation of T-cells residing in epithelia and involved in tissue homeostasis and repair. Upon epithelial CXADR-binding, JAML induces downstream cell signaling events in gamma-delta T-cells through PI3-kinase and MAP kinases. It results in proliferation and production of cytokines and growth factors by T-cells that in turn stimulate epithelial tissues repair. Functionally, (Microbial infection) Acts as a receptor for adenovirus type C. Its function is as follows. (Microbial infection) Acts as a receptor for Coxsackievirus B1 to B6. This Homo sapiens (Human) protein is Coxsackievirus and adenovirus receptor (CXADR).